The following is a 212-amino-acid chain: FMN-dependent NADH:quinone oxidoreductase (212 aa).

Residues Ser-10, 16 to 18, and 98 to 101 contribute to the FMN site; these read SFS and MWNF.

It belongs to the azoreductase type 1 family. In terms of assembly, homodimer. FMN serves as cofactor.

The enzyme catalyses 2 a quinone + NADH + H(+) = 2 a 1,4-benzosemiquinone + NAD(+). It catalyses the reaction N,N-dimethyl-1,4-phenylenediamine + anthranilate + 2 NAD(+) = 2-(4-dimethylaminophenyl)diazenylbenzoate + 2 NADH + 2 H(+). Its function is as follows. Quinone reductase that provides resistance to thiol-specific stress caused by electrophilic quinones. Functionally, also exhibits azoreductase activity. Catalyzes the reductive cleavage of the azo bond in aromatic azo compounds to the corresponding amines. This Desulfotalea psychrophila (strain LSv54 / DSM 12343) protein is FMN-dependent NADH:quinone oxidoreductase.